We begin with the raw amino-acid sequence, 402 residues long: tRNA pseudouridine synthase Pus10 (402 aa).

The active-site Nucleophile is the D215. The disordered stretch occupies residues 370 to 402 (ERGGHPGARGGTRRRPRKGPARPAGGRDRPRKT). Positions 380 to 389 (GTRRRPRKGP) are enriched in basic residues.

This sequence belongs to the pseudouridine synthase Pus10 family.

It catalyses the reaction uridine(54) in tRNA = pseudouridine(54) in tRNA. The enzyme catalyses uridine(55) in tRNA = pseudouridine(55) in tRNA. Responsible for synthesis of pseudouridine from uracil-54 and uracil-55 in the psi GC loop of transfer RNAs. The protein is tRNA pseudouridine synthase Pus10 of Cenarchaeum symbiosum (strain A).